The sequence spans 664 residues: Cyclic nucleotide-gated channel alpha-2 (664 aa).

The segment covering 1–20 (MTEKSNGVKSSPANNHNNHV) has biased composition (polar residues). Residues 1 to 49 (MTEKSNGVKSSPANNHNNHVPATIKANGKDESRTRSRPQSAADDDTSSE) are disordered. The Cytoplasmic portion of the chain corresponds to 1–144 (MTEKSNGVKS…PAGDWYYRWL (144 aa)). The chain crosses the membrane as a helical span at residues 145–166 (FVIAMPVLYNWCLLVARACFSD). Over 167–176 (LQRGYFLVWL) the chain is Extracellular. Residues 177 to 197 (VLDYFSDVVYIADLFIRLRTG) traverse the membrane as a helical segment. The Cytoplasmic portion of the chain corresponds to 198 to 222 (FLEQGLLVKDPKKLRDNYIHTLQFK). Residues 223–241 (LDVASIIPTDLIYFAVGIH) form a helical membrane-spanning segment. Topologically, residues 242-246 (NPELR) are extracellular. Residues 247-265 (FNRLLHFARMFEFFDRTET) traverse the membrane as a helical segment. Topologically, residues 266-272 (RTSYPNI) are cytoplasmic. Residues 270-378 (PNIFRISNLV…GNVGSMISNM (109 aa)) are ion conduction pathway. The helical transmembrane segment at 273-296 (FRISNLVLYILVIIHWNACIYYAI) threads the bilayer. Residues 297–319 (SKSIGFGVDTWVYPNITDPEYGY) are Extracellular-facing. Helical transmembrane passes span 320–354 (LARE…LFVI) and 355–379 (FDFL…SNMN). A selectivity filter region spans residues 337-340 (TIGE). Residues 380–456 (ATRAEFQAKI…STLKKVRIFQ (77 aa)) form a C-linker region. Residues 380-664 (ATRAEFQAKI…SPEPAAAEQP (285 aa)) are Cytoplasmic-facing. The tract at residues 460–580 (AGLLVELVLK…EERGREILMK (121 aa)) is cyclic nucleotide-binding domain. 3',5'-cyclic GMP-binding residues include Gly520, Ser523, Arg536, and Thr537. Arg536 and Thr537 together coordinate 3',5'-cyclic AMP. Positions 597-651 (VQEKLKQLETNMETLYTRFGRLLAEYTGAQQKLKQRITVLEVKMKQNTEDDYLSD) form a coiled coil. Residues 644–664 (TEDDYLSDGMNSPEPAAAEQP) form a disordered region.

The protein belongs to the cyclic nucleotide-gated cation channel (TC 1.A.1.5) family. CNGA2 subfamily. As to quaternary structure, the olfactory cyclic nucleotide-gated channel is an heterotetramer composed of CNGA2, CNGA4 and CNGB1b subunits with 2:1:1 stoichiometry.

It is found in the cell projection. Its subcellular location is the cilium membrane. It carries out the reaction Ca(2+)(in) = Ca(2+)(out). The enzyme catalyses Na(+)(in) = Na(+)(out). The catalysed reaction is K(+)(in) = K(+)(out). It catalyses the reaction NH4(+)(in) = NH4(+)(out). It carries out the reaction Rb(+)(in) = Rb(+)(out). The enzyme catalyses Li(+)(in) = Li(+)(out). The catalysed reaction is Cs(+)(in) = Cs(+)(out). Functionally, pore-forming subunit of the olfactory cyclic nucleotide-gated channel. Operates in the cilia of olfactory sensory neurons where chemical stimulation of the odorant is converted to an electrical signal. Mediates odorant-induced cAMP-dependent Ca(2+) influx triggering neuron depolarization. The rise of intracellular Ca(2+) levels potentiates the olfactory response by activating Ca(2+)-dependent Cl(-) channels, but it also serves as a negative feedback signal to desensitize the channel for rapid adaptation to odorants. Conducts cAMP- and cGMP-gated ion currents, with permeability for monovalent and divalent cations. The sequence is that of Cyclic nucleotide-gated channel alpha-2 from Oryctolagus cuniculus (Rabbit).